The primary structure comprises 961 residues: Copper-exporting P-type ATPase (961 aa).

2 consecutive HMA domains span residues glutamine 3–threonine 64 and proline 69–threonine 130. Cu(+)-binding residues include cysteine 14, cysteine 17, cysteine 80, and cysteine 83. Disordered stretches follow at residues glutamine 131–leucine 153 and valine 178–alanine 201. Over residues leucine 142–glutamate 151 the composition is skewed to polar residues. Residues glutamate 226–glutamate 289 enclose the HMA 3 domain. 2 residues coordinate Cu(+): cysteine 237 and cysteine 240. Transmembrane regions (helical) follow at residues alanine 316–methionine 336, proline 345–tyrosine 365, threonine 381–proline 401, alanine 565–phenylalanine 585, and valine 592–leucine 612. The active-site 4-aspartylphosphate intermediate is the aspartate 650. Residues aspartate 847 and aspartate 851 each coordinate Mg(2+). Helical transmembrane passes span valine 860–methionine 880, leucine 906–phenylalanine 926, and glycine 928–valine 948.

This sequence belongs to the cation transport ATPase (P-type) (TC 3.A.3) family. Type IB subfamily.

It localises to the cell membrane. The catalysed reaction is Cu(+)(in) + ATP + H2O = Cu(+)(out) + ADP + phosphate + H(+). Functionally, involved in copper export. This is Copper-exporting P-type ATPase (copA) from Yersinia pestis.